Consider the following 395-residue polypeptide: Altered inheritance of mitochondria protein 39, mitochondrial (395 aa).

The helical transmembrane segment at 156-176 threads the bilayer; it reads QIWSAIFGGIFGVILGYSLIY.

Belongs to the AIM39 family.

Its subcellular location is the mitochondrion membrane. The protein is Altered inheritance of mitochondria protein 39, mitochondrial (AIM39) of Saccharomyces cerevisiae (strain ATCC 204508 / S288c) (Baker's yeast).